The sequence spans 233 residues: 1-(5-phosphoribosyl)-5-[(5-phosphoribosylamino)methylideneamino] imidazole-4-carboxamide isomerase (233 aa).

D8 acts as the Proton acceptor in catalysis. D125 (proton donor) is an active-site residue.

This sequence belongs to the HisA/HisF family.

It localises to the cytoplasm. It carries out the reaction 1-(5-phospho-beta-D-ribosyl)-5-[(5-phospho-beta-D-ribosylamino)methylideneamino]imidazole-4-carboxamide = 5-[(5-phospho-1-deoxy-D-ribulos-1-ylimino)methylamino]-1-(5-phospho-beta-D-ribosyl)imidazole-4-carboxamide. The protein operates within amino-acid biosynthesis; L-histidine biosynthesis; L-histidine from 5-phospho-alpha-D-ribose 1-diphosphate: step 4/9. The protein is 1-(5-phosphoribosyl)-5-[(5-phosphoribosylamino)methylideneamino] imidazole-4-carboxamide isomerase of Thermococcus kodakarensis (strain ATCC BAA-918 / JCM 12380 / KOD1) (Pyrococcus kodakaraensis (strain KOD1)).